The chain runs to 440 residues: Phosphatidylcholine-sterol acyltransferase (440 aa).

A signal peptide spans 1–24; that stretch reads MGPPGSPWQWVTLLLGLLLPPAAP. Asparagine 44 carries N-linked (GlcNAc...) (complex) asparagine glycosylation. A disulfide bond links cysteine 74 and cysteine 98. Asparagine 108 is a glycosylation site (N-linked (GlcNAc...) (complex) asparagine). Serine 205 functions as the Nucleophile in the catalytic mechanism. Asparagine 296 carries N-linked (GlcNAc...) (complex) asparagine glycosylation. Cysteine 337 and cysteine 380 are oxidised to a cystine. Active-site charge relay system residues include aspartate 369 and histidine 401. An N-linked (GlcNAc...) (complex) asparagine glycan is attached at asparagine 408. Threonine 431 is a glycosylation site (O-linked (GalNAc...) threonine). Serine 433 is a glycosylation site (O-linked (GalNAc...) serine).

This sequence belongs to the AB hydrolase superfamily. Lipase family. O- and N-glycosylated. O-glycosylation on Thr-431 and Ser-433 consists of sialylated galactose beta 1--&gt;3N-acetylgalactosamine structures. N-glycosylated sites contain sialylated triantennary and/or biantennary complex structures. As to expression, detected in blood plasma. Detected in cerebral spinal fluid (at protein level). Detected in liver. Expressed mainly in brain, liver and testes.

The protein localises to the secreted. It catalyses the reaction a sterol + a 1,2-diacyl-sn-glycero-3-phosphocholine = a sterol ester + a 1-acyl-sn-glycero-3-phosphocholine. The enzyme catalyses a 1-O-alkyl-2-acetyl-sn-glycero-3-phosphocholine + H2O = a 1-O-alkyl-sn-glycero-3-phosphocholine + acetate + H(+). It carries out the reaction a 1-hexadecanoyl-2-acyl-sn-glycero-3-phosphocholine + (24S)-hydroxycholesterol = (24S)-24-hydroxycholesterol ester + 1-hexadecanoyl-sn-glycero-3-phosphocholine. The catalysed reaction is (24S)-hydroxycholesterol + 1-hexadecanoyl-2-(9Z,12Z-octadecadienoyl)-sn-glycero-3-phosphocholine = (24S)-hydroxycholesterol 3-linoleoate + 1-hexadecanoyl-sn-glycero-3-phosphocholine. It catalyses the reaction 1-hexadecanoyl-2-(5Z,8Z,11Z,14Z-eicosatetraenoyl)-sn-glycero-3-phosphocholine + cholesterol = cholesteryl (5Z,8Z,11Z,14Z)-eicosatetraenoate + 1-hexadecanoyl-sn-glycero-3-phosphocholine. The enzyme catalyses 1-hexadecanoyl-2-(9Z-octadecenoyl)-sn-glycero-3-phosphocholine + cholesterol = cholesteryl (9Z-octadecenoate) + 1-hexadecanoyl-sn-glycero-3-phosphocholine. It carries out the reaction 1-hexadecanoyl-2-(8Z,11Z,14Z-eicosatrienoyl)-sn-glycero-3-phosphocholine + cholesterol = cholesteryl (8Z,11Z,14Z)-eicosatrienoate + 1-hexadecanoyl-sn-glycero-3-phosphocholine. The catalysed reaction is 1-hexadecanoyl-2-(5Z,8Z,11Z-eicosatrienoyl)-sn-glycero-3-phosphocholine + cholesterol = cholesteryl (5Z,8Z,11Z)-eicosatrienoate + 1-hexadecanoyl-sn-glycero-3-phosphocholine. It catalyses the reaction 1-hexadecanoyl-2-(5Z,8Z,11Z,14Z,17Z-eicosapentaenoyl)-sn-glycero-3-phosphocholine + cholesterol = (5Z,8Z,11Z,14Z,17Z-eicosapentaenoyl)-cholesterol + 1-hexadecanoyl-sn-glycero-3-phosphocholine. The enzyme catalyses 1-hexadecanoyl-2-(9Z,12Z-octadecadienoyl)-sn-glycero-3-phosphocholine + cholesterol = cholesteryl (9Z,12Z)-octadecadienoate + 1-hexadecanoyl-sn-glycero-3-phosphocholine. It carries out the reaction 1-hexadecanoyl-2-(6Z,9Z,12Z-octadecatrienoyl)-sn-glycero-3-phosphocholine + cholesterol = (6Z,9Z,12Z-octadecatrienoyl)-cholesterol + 1-hexadecanoyl-sn-glycero-3-phosphocholine. The catalysed reaction is 1-hexadecanoyl-2-(11Z,14Z,17Z-eicosatrienoyl)-sn-glycero-3-phosphocholine + cholesterol = (11Z,14Z,17Z-eicosatrienoyl)-cholesterol + 1-hexadecanoyl-sn-glycero-3-phosphocholine. It catalyses the reaction 1-hexadecanoyl-2-(9Z,12Z,15Z-octadecatrienoyl)-sn-glycero-3-phosphocholine + cholesterol = (9Z,12Z,15Z-octadecatrienoyl)-cholesterol + 1-hexadecanoyl-sn-glycero-3-phosphocholine. The enzyme catalyses 1-hexadecanoyl-2-(9Z,12Z-octadecadienoyl)-sn-glycero-3-phosphocholine + H2O = (9Z,12Z)-octadecadienoate + 1-hexadecanoyl-sn-glycero-3-phosphocholine + H(+). It carries out the reaction 1-hexadecanoyl-2-(5Z,8Z,11Z,14Z-eicosatetraenoyl)-sn-glycero-3-phosphocholine + H2O = 1-hexadecanoyl-sn-glycero-3-phosphocholine + (5Z,8Z,11Z,14Z)-eicosatetraenoate + H(+). The catalysed reaction is a 1-O-alkyl-2-acetyl-sn-glycero-3-phosphocholine + 1-hexadecanoyl-sn-glycero-3-phosphocholine = 1-hexadecanoyl-2-acetyl-sn-glycero-3-phosphocholine + a 1-O-alkyl-sn-glycero-3-phosphocholine. With respect to regulation, APOA1 is the most potent activator in plasma. Also activated by APOE, APOC1 and APOA4. Inhibited by haptoglobin and 5,5'-dithiobis-(2-nitrobenzoic acid) (DTNB). Its function is as follows. Central enzyme in the extracellular metabolism of plasma lipoproteins. Synthesized mainly in the liver and secreted into plasma where it converts cholesterol and phosphatidylcholines (lecithins) to cholesteryl esters and lysophosphatidylcholines on the surface of high and low density lipoproteins (HDLs and LDLs). The cholesterol ester is then transported back to the liver. Has a preference for plasma 16:0-18:2 or 18:O-18:2 phosphatidylcholines. Also produced in the brain by primary astrocytes, and esterifies free cholesterol on nascent APOE-containing lipoproteins secreted from glia and influences cerebral spinal fluid (CSF) APOE- and APOA1 levels. Together with APOE and the cholesterol transporter ABCA1, plays a key role in the maturation of glial-derived, nascent lipoproteins. Required for remodeling high-density lipoprotein particles into their spherical forms. Catalyzes the hydrolysis of 1-O-alkyl-2-acetyl-sn-glycero-3-phosphocholine (platelet-activating factor or PAF) to 1-O-alkyl-sn-glycero-3-phosphocholine (lyso-PAF). Also catalyzes the transfer of the acetate group from PAF to 1-hexadecanoyl-sn-glycero-3-phosphocholine forming lyso-PAF. Catalyzes the esterification of (24S)-hydroxycholesterol (24(S)OH-C), also known as cerebrosterol to produce 24(S)OH-C monoesters. The polypeptide is Phosphatidylcholine-sterol acyltransferase (LCAT) (Homo sapiens (Human)).